The sequence spans 450 residues: Glucose-6-phosphate isomerase (450 aa).

A Phosphothreonine modification is found at threonine 38. Glutamate 290 functions as the Proton donor in the catalytic mechanism. Active-site residues include histidine 311 and lysine 425.

The protein belongs to the GPI family.

The protein localises to the cytoplasm. It catalyses the reaction alpha-D-glucose 6-phosphate = beta-D-fructose 6-phosphate. The protein operates within carbohydrate biosynthesis; gluconeogenesis. It participates in carbohydrate degradation; glycolysis; D-glyceraldehyde 3-phosphate and glycerone phosphate from D-glucose: step 2/4. Its function is as follows. Catalyzes the reversible isomerization of glucose-6-phosphate to fructose-6-phosphate. In Bacillus subtilis (strain 168), this protein is Glucose-6-phosphate isomerase.